Reading from the N-terminus, the 316-residue chain is 4-hydroxy-3-methylbut-2-enyl diphosphate reductase (316 aa).

Cysteine 12 provides a ligand contact to [4Fe-4S] cluster. (2E)-4-hydroxy-3-methylbut-2-enyl diphosphate contacts are provided by histidine 41 and histidine 74. Histidine 41 and histidine 74 together coordinate dimethylallyl diphosphate. Residues histidine 41 and histidine 74 each coordinate isopentenyl diphosphate. Cysteine 96 lines the [4Fe-4S] cluster pocket. (2E)-4-hydroxy-3-methylbut-2-enyl diphosphate is bound at residue histidine 124. Histidine 124 is a binding site for dimethylallyl diphosphate. Histidine 124 is an isopentenyl diphosphate binding site. Glutamate 126 functions as the Proton donor in the catalytic mechanism. Threonine 167 is a (2E)-4-hydroxy-3-methylbut-2-enyl diphosphate binding site. Residue cysteine 197 coordinates [4Fe-4S] cluster. (2E)-4-hydroxy-3-methylbut-2-enyl diphosphate contacts are provided by serine 225, serine 226, asparagine 227, and serine 269. 4 residues coordinate dimethylallyl diphosphate: serine 225, serine 226, asparagine 227, and serine 269. Serine 225, serine 226, asparagine 227, and serine 269 together coordinate isopentenyl diphosphate.

The protein belongs to the IspH family. In terms of assembly, homodimer. [4Fe-4S] cluster is required as a cofactor.

The enzyme catalyses isopentenyl diphosphate + 2 oxidized [2Fe-2S]-[ferredoxin] + H2O = (2E)-4-hydroxy-3-methylbut-2-enyl diphosphate + 2 reduced [2Fe-2S]-[ferredoxin] + 2 H(+). It carries out the reaction dimethylallyl diphosphate + 2 oxidized [2Fe-2S]-[ferredoxin] + H2O = (2E)-4-hydroxy-3-methylbut-2-enyl diphosphate + 2 reduced [2Fe-2S]-[ferredoxin] + 2 H(+). It participates in isoprenoid biosynthesis; dimethylallyl diphosphate biosynthesis; dimethylallyl diphosphate from (2E)-4-hydroxy-3-methylbutenyl diphosphate: step 1/1. Its pathway is isoprenoid biosynthesis; isopentenyl diphosphate biosynthesis via DXP pathway; isopentenyl diphosphate from 1-deoxy-D-xylulose 5-phosphate: step 6/6. Catalyzes the conversion of 1-hydroxy-2-methyl-2-(E)-butenyl 4-diphosphate (HMBPP) into a mixture of isopentenyl diphosphate (IPP) and dimethylallyl diphosphate (DMAPP). Acts in the terminal step of the DOXP/MEP pathway for isoprenoid precursor biosynthesis. In Salmonella paratyphi A (strain ATCC 9150 / SARB42), this protein is 4-hydroxy-3-methylbut-2-enyl diphosphate reductase.